Here is a 461-residue protein sequence, read N- to C-terminus: Serine/threonine-protein kinase ppk24, mitochondrial (461 aa).

In terms of domain architecture, Protein kinase spans 120–416 (FQHLKSIAKG…LDSILGTAWV (297 aa)). ATP contacts are provided by residues 126–134 (IAKGATSTI) and Lys-153. Asp-256 serves as the catalytic Proton acceptor.

The protein belongs to the protein kinase superfamily. Ser/Thr protein kinase family.

It localises to the mitochondrion. It carries out the reaction L-seryl-[protein] + ATP = O-phospho-L-seryl-[protein] + ADP + H(+). It catalyses the reaction L-threonyl-[protein] + ATP = O-phospho-L-threonyl-[protein] + ADP + H(+). Functionally, has a role late in meiosis. The sequence is that of Serine/threonine-protein kinase ppk24, mitochondrial (ppk24) from Schizosaccharomyces pombe (strain 972 / ATCC 24843) (Fission yeast).